Reading from the N-terminus, the 89-residue chain is Small ribosomal subunit protein uS15 (89 aa).

This sequence belongs to the universal ribosomal protein uS15 family. As to quaternary structure, part of the 30S ribosomal subunit. Forms a bridge to the 50S subunit in the 70S ribosome, contacting the 23S rRNA.

Functionally, one of the primary rRNA binding proteins, it binds directly to 16S rRNA where it helps nucleate assembly of the platform of the 30S subunit by binding and bridging several RNA helices of the 16S rRNA. In terms of biological role, forms an intersubunit bridge (bridge B4) with the 23S rRNA of the 50S subunit in the ribosome. The sequence is that of Small ribosomal subunit protein uS15 from Buchnera aphidicola subsp. Baizongia pistaciae (strain Bp).